A 718-amino-acid chain; its full sequence is DNA Primase-polymerase (718 aa).

The polymerase stretch occupies residues 1–176; the sequence is MIMEIPAIKA…ILGEFAEHKI (176 aa). Positions 1-292 are primase; the sequence is MIMEIPAIKA…NESDCPFEPY (292 aa). Residues D78 and D80 each act as for polymerase activity in the active site. Positions 78, 80, 108, and 115 each coordinate Mg(2+). The For polymerase activity role is filled by H115. Residue E139 is the For polymerase and primase activities of the active site. 304-718 is a binding site for DNA; that stretch reads EKDPLWLYKV…GKPIRAIVVG (415 aa). Positions 404 to 593 are helicase; it reads PEIVKNLLLN…AEGFAKYLAG (190 aa).

Homohexamer. Mg(2+) serves as cofactor.

It catalyses the reaction DNA(n) + a 2'-deoxyribonucleoside 5'-triphosphate = DNA(n+1) + diphosphate. The catalysed reaction is ATP + H2O = ADP + phosphate + H(+). Multifunctional protein with primer synthesis, DNA polymerization, and DNA helicase activities. Recognizes a specific sequence motif 5'-TTTGGTTA-3' and initiates DNA synthesis. This chain is DNA Primase-polymerase (28), found in Nitratiruptor phage NrS-1.